Consider the following 309-residue polypeptide: UPF0252 protein PH0672 (309 aa).

The next 2 membrane-spanning stretches (helical) occupy residues 5–25 and 106–126; these read SVII…NESI and AVLT…LMIF.

The protein belongs to the UPF0252 family.

Its subcellular location is the cell membrane. This Pyrococcus horikoshii (strain ATCC 700860 / DSM 12428 / JCM 9974 / NBRC 100139 / OT-3) protein is UPF0252 protein PH0672.